Consider the following 73-residue polypeptide: NADH dehydrogenase [ubiquinone] 1 beta subcomplex subunit 3-B (73 aa).

Residues 31–48 (ALPGLGIGVAAFCVYLVG) form a helical membrane-spanning segment.

This sequence belongs to the complex I NDUFB3 subunit family. Complex I is composed of at least 49 different subunits.

The protein resides in the mitochondrion inner membrane. Functionally, accessory subunit of the mitochondrial membrane respiratory chain NADH dehydrogenase (Complex I), that is believed not to be involved in catalysis. Complex I functions in the transfer of electrons from NADH to the respiratory chain. The immediate electron acceptor for the enzyme is believed to be ubiquinone. The protein is NADH dehydrogenase [ubiquinone] 1 beta subcomplex subunit 3-B of Arabidopsis thaliana (Mouse-ear cress).